We begin with the raw amino-acid sequence, 664 residues long: MAGLSSSQIPDGEFTAVVYRLIRDSRYSEAVQLLSAELQRSSRSRAGLSLLAYCYYRLQEFELAAECYEQLSQMHPELEQYRLYQAQALYKACLYPEATRVAFLLDNPAYQTRVLRLQAAIKYSEGDLPGARSLVEQLLSGEGVEDSGGESDYDGQINLGCLLYKEGHYEAACSKFLAALQASGYQPDLSYNLALAYYSSRQYAPALKHIADIIERGIRQHPELGVGMTTEGIDVRSVGNTIVLHQTALVEAFNLKAAIEYQLRNYEAAQEALTDMPPRAEEELDPVTLHNQALMNMDAKPTEGFEKLQFLLQQNPFPPETFGNLLLLYCKYEYFDLAADVLAENAHLTYKFLTPYLYDFLDAMITCQTAPEEAFIKLDGLAGMLTEQLRKLTIQVQDSRHSRDDESAKKAVNEYDETLEKYIPVLMAQAKIYWNFENYPMVEKIFRKSVEFCNDHDVWKLNVAHVLFMQENKYKEAIGFYEPIVKKNYDNILSVSAIVLANLCVSYIMTSQNEEAEELMRKIEKEEEQLSYGDPDKKIYHLCIVNLVIGTLYCAKGNYDFGISRVIKSLEPYHKKLGTDTWYYAKRCFLSLLENMSKHTIMLRDSVIQECVQFLEHCELYGRNIPAVIEQPLEEERMHTGKNTVTYESRKLRALIYEIIGWNV.

TPR repeat units follow at residues 11–44, 45–78, 153–186, 188–220, 385–418, 423–456, and 458–491; these read DGEF…SSRS, RAGL…HPEL, YDGQ…SGYQ, DLSY…GIRQ, LTEQ…YDET, IPVL…CNDH, and VWKL…NYDN. Positions 507 to 534 form a coiled coil; the sequence is YIMTSQNEEAEELMRKIEKEEEQLSYGD. The TPR 8 repeat unit spans residues 543–576; that stretch reads CIVNLVIGTLYCAKGNYDFGISRVIKSLEPYHKK.

It belongs to the TTC30/dfy-1/fleer family. Interacts with the IFT B complex components IFT27, IFT46, IFT74, IFT52, IFT57, IFT80, IFT81 and IFT88. Interacts with KIF17.

The protein resides in the cell projection. It localises to the cilium. Functionally, required for polyglutamylation of axonemal tubulin. Plays a role in anterograde intraflagellar transport (IFT), the process by which cilia precursors are transported from the base of the cilium to the site of their incorporation at the tip. This Mus musculus (Mouse) protein is Intraflagellar transport protein 70B (Ift70b).